The chain runs to 699 residues: MLDHTRAPELNLDLDLDVSNSPKGSMKGNNFKEQDLCPPLPMQGLGKGDKREEQALGPEPSEPRQPTEEEEALIEFHRSYRELFQFFCNNTTIHGAIRLVCSKHNRMKTAFWAVLWLCTFGMMYWQFALLFEEYFSYPVSLNINLNSDKLVFPAVTVCTLNPYRYTEIKEDLEELDRITEQTLFDLYKYNSSYTRQAGGRRRSTRDLRGALPHPLQRLRTPPPPNPARSARSASSSVRDNNPQVDRKDWKIGFQLCNQNKSDCFYQTYSSGVDAVREWYRFHYINILSRLPDTSPALEEEALGSFIFTCRFNQAPCNQANYSQFHHPMYGNCYTFNNKNNSNLWMSSMPGVNNGLSLTLRTEQNDFIPLLSTVTGARVMVHGQDEPAFMDDGGFNVRPGVETSISMRKEALDSLGGNYGDCTENGSDVPVKNLYPSKYTQQVCIHSCFQENMIKKCGCAYIFYPKPKGVEFCDYLKQSSWGYCYYKLQAAFSLDSLGCFSKCRKPCSVTNYKLSAGYSRWPSVKSQDWIFEMLSLQNNYTINNKRNGVAKLNIFFKELNYKTNSESPSVTMVSLLSNLGSQWSLWFGSSVLSVVEMAELIFDLLVITLIMLLHRFRSRYWSPGRGARGAREVASTPASSFPSRFCPHPTSPPPSLPQQGTTPPLALTAPPPAYATLGPSASPLDSAVPGSSACAPAMAL.

Residues 1–71 (MLDHTRAPEL…EPRQPTEEEE (71 aa)) form a disordered region. Residues 1–110 (MLDHTRAPEL…CSKHNRMKTA (110 aa)) are Cytoplasmic-facing. The helical transmembrane segment at 111–131 (FWAVLWLCTFGMMYWQFALLF) threads the bilayer. The Extracellular segment spans residues 132–589 (EEYFSYPVSL…SQWSLWFGSS (458 aa)). 10 disulfides stabilise this stretch: cysteine 158–cysteine 332, cysteine 256–cysteine 263, cysteine 309–cysteine 316, cysteine 421–cysteine 506, cysteine 443–cysteine 483, cysteine 443–cysteine 502, cysteine 447–cysteine 498, cysteine 456–cysteine 483, cysteine 456–cysteine 506, and cysteine 458–cysteine 472. A gating release of inhibition by proteolysis (GRIP); protease-sensitive region that is responsible for the proteolytic activation of the channel region spans residues 200–270 (RRRSTRDLRG…SDCFYQTYSS (71 aa)). Positions 211–244 (LPHPLQRLRTPPPPNPARSARSASSSVRDNNPQV) are disordered. The segment covering 227–238 (ARSARSASSSVR) has biased composition (low complexity). The helical transmembrane segment at 590-610 (VLSVVEMAELIFDLLVITLIM) threads the bilayer. Over 611-699 (LLHRFRSRYW…SSACAPAMAL (89 aa)) the chain is Cytoplasmic. The tract at residues 637-699 (ASSFPSRFCP…SSACAPAMAL (63 aa)) is disordered. A compositionally biased stretch (low complexity) spans 656 to 667 (PQQGTTPPLALT). The short motif at 669–673 (PPPAY) is the PY motif; recruits WW domain-containing proteins and is thereby required for ubiquitination and inhibition of the channel by NEDD4 and NEDD4L element.

It belongs to the amiloride-sensitive sodium channel (TC 1.A.6) family. SCNN1A subfamily. In terms of assembly, heterotrimer; containing an alpha/SCNN1A, a beta/SCNN1B and a gamma/SCNN1G subunit. Interacts with WWP1 (via WW domains). Interacts with WWP2 (via WW domains); inhibits the channel. Interacts with BPIFA1; the interaction is indirect via SCNN1B and inhibits the proteolytic processing of SCNN1A and SCNN1G and the activation of ENaC. Interacts with the full-length immature form of PCSK9 (pro-PCSK9). Ubiquitinated. Can be ubiquitinated at multiple sites and undergo monoubiquitination and polyubiquitination. Ubiquitination by NEDD4 or NEDD4L inhibits the ENaC channel through endocytosis, intracellular retention and degradation of its individual subunits. In terms of processing, ENaC is activated through the proteolytic maturation of its subunits. Furin cleaves the SCNN1A subunit, which results in a stepwise increase in the open probability of the channel due to the release of an inhibitory tract. BPIFA1, which is recruited by the SCNN1B subunit, prevents the proteolytic activation of ENaC. Post-translationally, N-glycosylated. In terms of tissue distribution, expressed in kidney (at protein level). Expressed in lung (at protein level). Expressed in the epididymis (at protein level). In the caput and corpus regions of the epididymis, expressed uniformly on the luminal and basal surfaces of the ducts and in the sperm in the duct lumen. Also expressed in distal colon and, at low levels, in liver.

The protein resides in the apical cell membrane. It localises to the cell projection. Its subcellular location is the cilium. The protein localises to the cytoplasmic granule. It is found in the cytoplasm. The protein resides in the cytoplasmic vesicle. It localises to the secretory vesicle. Its subcellular location is the acrosome. The protein localises to the flagellum. The enzyme catalyses Na(+)(in) = Na(+)(out). With respect to regulation, originally identified and characterized by its inhibition by the diuretic drug amiloride. Functionally, this is one of the three pore-forming subunits of the heterotrimeric epithelial sodium channel (ENaC), a critical regulator of sodium balance and fluid homeostasis. ENaC operates in epithelial tissues, where it mediates the electrodiffusion of sodium ions from extracellular fluid through the apical membrane of cells, with water following osmotically. It plays a key role in maintaining sodium homeostasis through electrogenic sodium reabsorption in the kidneys. Additionally, ENaC is essential for airway surface liquid homeostasis, which is crucial for proper mucus clearance. The chain is Epithelial sodium channel subunit alpha from Mus musculus (Mouse).